The following is a 388-amino-acid chain: Gastricsin (388 aa).

Positions Met-1 to Ala-16 are cleaved as a signal peptide. A propeptide spans Thr-17–Leu-59 (activation peptide). One can recognise a Peptidase A1 domain in the interval Tyr-73 to Ala-385. Asp-91 is a catalytic residue. Cystine bridges form between Cys-104/Cys-109 and Cys-267/Cys-271. Residue Asp-276 is part of the active site. Cys-310 and Cys-343 are oxidised to a cystine.

This sequence belongs to the peptidase A1 family.

The protein resides in the secreted. It catalyses the reaction More restricted specificity than pepsin A, but shows preferential cleavage at Tyr-|-Xaa bonds. High activity on hemoglobin.. Its activity is regulated as follows. Inhibited by pepstatin. Functionally, hydrolyzes a variety of proteins. This is Gastricsin (PGC) from Callithrix jacchus (White-tufted-ear marmoset).